The chain runs to 795 residues: Phenylalanine--tRNA ligase beta subunit (795 aa).

The tRNA-binding domain maps to 39 to 149 (SGEFSGVVVA…ADAPIGVDIR (111 aa)). The 76-residue stretch at 402 to 477 (PKQPIIRLRR…RIYGYNRIPN (76 aa)) folds into the B5 domain. Asp-455, Asp-461, Glu-464, and Glu-465 together coordinate Mg(2+). An FDX-ACB domain is found at 701-794 (SKFPANNRDI…LAQRFQASLR (94 aa)).

This sequence belongs to the phenylalanyl-tRNA synthetase beta subunit family. Type 1 subfamily. Tetramer of two alpha and two beta subunits. Mg(2+) serves as cofactor.

It is found in the cytoplasm. The catalysed reaction is tRNA(Phe) + L-phenylalanine + ATP = L-phenylalanyl-tRNA(Phe) + AMP + diphosphate + H(+). The chain is Phenylalanine--tRNA ligase beta subunit from Haemophilus ducreyi (strain 35000HP / ATCC 700724).